A 715-amino-acid chain; its full sequence is Elongation factor G (715 aa).

Residues Asn-8–Thr-290 enclose the tr-type G domain. Residues Ala-17–Thr-24, Asp-88–His-92, and Asn-142–Asp-145 each bind GTP.

This sequence belongs to the TRAFAC class translation factor GTPase superfamily. Classic translation factor GTPase family. EF-G/EF-2 subfamily.

It localises to the cytoplasm. Functionally, catalyzes the GTP-dependent ribosomal translocation step during translation elongation. During this step, the ribosome changes from the pre-translocational (PRE) to the post-translocational (POST) state as the newly formed A-site-bound peptidyl-tRNA and P-site-bound deacylated tRNA move to the P and E sites, respectively. Catalyzes the coordinated movement of the two tRNA molecules, the mRNA and conformational changes in the ribosome. The sequence is that of Elongation factor G from Ectopseudomonas mendocina (strain ymp) (Pseudomonas mendocina).